A 221-amino-acid chain; its full sequence is Deoxyribose-phosphate aldolase (221 aa).

The Proton donor/acceptor role is filled by D91. K153 serves as the catalytic Schiff-base intermediate with acetaldehyde. The Proton donor/acceptor role is filled by K182.

This sequence belongs to the DeoC/FbaB aldolase family. DeoC type 1 subfamily.

Its subcellular location is the cytoplasm. It carries out the reaction 2-deoxy-D-ribose 5-phosphate = D-glyceraldehyde 3-phosphate + acetaldehyde. It functions in the pathway carbohydrate degradation; 2-deoxy-D-ribose 1-phosphate degradation; D-glyceraldehyde 3-phosphate and acetaldehyde from 2-deoxy-alpha-D-ribose 1-phosphate: step 2/2. In terms of biological role, catalyzes a reversible aldol reaction between acetaldehyde and D-glyceraldehyde 3-phosphate to generate 2-deoxy-D-ribose 5-phosphate. This chain is Deoxyribose-phosphate aldolase, found in Clostridium botulinum (strain Eklund 17B / Type B).